Here is a 483-residue protein sequence, read N- to C-terminus: Altronate oxidoreductase (483 aa).

An NAD(+)-binding site is contributed by 18–29 (IIQFGEGNFLRA).

The protein belongs to the mannitol dehydrogenase family. UxaB subfamily.

The enzyme catalyses D-altronate + NAD(+) = keto-D-tagaturonate + NADH + H(+). It participates in carbohydrate metabolism; pentose and glucuronate interconversion. In Escherichia coli O6:K15:H31 (strain 536 / UPEC), this protein is Altronate oxidoreductase.